Here is an 89-residue protein sequence, read N- to C-terminus: Small ribosomal subunit protein uS14 (89 aa).

This sequence belongs to the universal ribosomal protein uS14 family. Part of the 30S ribosomal subunit. Contacts proteins S3 and S10.

In terms of biological role, binds 16S rRNA, required for the assembly of 30S particles and may also be responsible for determining the conformation of the 16S rRNA at the A site. In Flavobacterium johnsoniae (strain ATCC 17061 / DSM 2064 / JCM 8514 / BCRC 14874 / CCUG 350202 / NBRC 14942 / NCIMB 11054 / UW101) (Cytophaga johnsonae), this protein is Small ribosomal subunit protein uS14.